A 195-amino-acid chain; its full sequence is Probable peroxygenase 4 (195 aa).

One can recognise an EF-hand domain in the interval 14–49; that stretch reads EEDNFLQRHVAFFDRNKDGIVYPSETFQGFRAIGCG. Histidine 22 is a binding site for heme. 4 residues coordinate Ca(2+): aspartate 27, asparagine 29, aspartate 31, and glutamate 38. Positions 70–79 match the Proline-knot motif; it reads PGKGFSIWFP. Serine 177 carries the post-translational modification Phosphoserine.

Belongs to the caleosin family. In terms of assembly, homodimer. Heme b is required as a cofactor. It depends on Ca(2+) as a cofactor. As to expression, expressed in roots, leaves, stems, shoots, flowers and germinated seeds. Barely detected in dry seeds prior to germination. Preferentially expressed in vascular bundles and in guard cells.

The protein resides in the lipid droplet. The catalysed reaction is RH + ROOH = ROH + ROH.. In terms of biological role, calcium-binding peroxygenase involved in the degradation of storage lipid in oil bodies. May be involved in the interaction between oil bodies and vacuoles during seed germination. Acts as a negative regulator of abscisic acid responses in non-seed tissues. This chain is Probable peroxygenase 4 (PXG4), found in Arabidopsis thaliana (Mouse-ear cress).